The following is a 448-amino-acid chain: Probable glycine dehydrogenase (decarboxylating) subunit 1 (448 aa).

This sequence belongs to the GcvP family. N-terminal subunit subfamily. As to quaternary structure, the glycine cleavage system is composed of four proteins: P, T, L and H. In this organism, the P 'protein' is a heterodimer of two subunits.

The enzyme catalyses N(6)-[(R)-lipoyl]-L-lysyl-[glycine-cleavage complex H protein] + glycine + H(+) = N(6)-[(R)-S(8)-aminomethyldihydrolipoyl]-L-lysyl-[glycine-cleavage complex H protein] + CO2. Functionally, the glycine cleavage system catalyzes the degradation of glycine. The P protein binds the alpha-amino group of glycine through its pyridoxal phosphate cofactor; CO(2) is released and the remaining methylamine moiety is then transferred to the lipoamide cofactor of the H protein. This is Probable glycine dehydrogenase (decarboxylating) subunit 1 from Listeria welshimeri serovar 6b (strain ATCC 35897 / DSM 20650 / CCUG 15529 / CIP 8149 / NCTC 11857 / SLCC 5334 / V8).